A 598-amino-acid polypeptide reads, in one-letter code: Aspartate--tRNA(Asp/Asn) ligase (598 aa).

Residue glutamate 182 participates in L-aspartate binding. The tract at residues 206–209 (QIFK) is aspartate. Arginine 228 is an L-aspartate binding site. Residues 228–230 (RDE) and glutamine 237 each bind ATP. Residue histidine 456 participates in L-aspartate binding. Glutamate 490 is an ATP binding site. Position 497 (arginine 497) interacts with L-aspartate. Position 542 to 545 (542 to 545 (GLDR)) interacts with ATP.

The protein belongs to the class-II aminoacyl-tRNA synthetase family. Type 1 subfamily. As to quaternary structure, homodimer.

It is found in the cytoplasm. The catalysed reaction is tRNA(Asx) + L-aspartate + ATP = L-aspartyl-tRNA(Asx) + AMP + diphosphate. Aspartyl-tRNA synthetase with relaxed tRNA specificity since it is able to aspartylate not only its cognate tRNA(Asp) but also tRNA(Asn). Reaction proceeds in two steps: L-aspartate is first activated by ATP to form Asp-AMP and then transferred to the acceptor end of tRNA(Asp/Asn). This chain is Aspartate--tRNA(Asp/Asn) ligase, found in Lachnoclostridium phytofermentans (strain ATCC 700394 / DSM 18823 / ISDg) (Clostridium phytofermentans).